Here is a 452-residue protein sequence, read N- to C-terminus: Probable carboxypeptidase ACLA_088580 (452 aa).

A signal peptide spans 1-18 (MRSLTLLLSLSTALRSVA). 2 N-linked (GlcNAc...) asparagine glycosylation sites follow: Asn-107 and Asn-156. A Zn(2+)-binding site is contributed by Asp-175. The active-site Proton acceptor is Glu-207. Glu-208 serves as a coordination point for Zn(2+).

Belongs to the peptidase M20A family. The cofactor is Zn(2+).

It is found in the secreted. The polypeptide is Probable carboxypeptidase ACLA_088580 (Aspergillus clavatus (strain ATCC 1007 / CBS 513.65 / DSM 816 / NCTC 3887 / NRRL 1 / QM 1276 / 107)).